Consider the following 177-residue polypeptide: Large ribosomal subunit protein uL6 (177 aa).

K44 bears the N6-acetyllysine mark.

Belongs to the universal ribosomal protein uL6 family. As to quaternary structure, part of the 50S ribosomal subunit.

Functionally, this protein binds to the 23S rRNA, and is important in its secondary structure. It is located near the subunit interface in the base of the L7/L12 stalk, and near the tRNA binding site of the peptidyltransferase center. The polypeptide is Large ribosomal subunit protein uL6 (Escherichia coli O139:H28 (strain E24377A / ETEC)).